The sequence spans 255 residues: Post-GPI attachment to proteins factor 2 (255 aa).

The next 5 helical transmembrane spans lie at 23–43 (LALV…IWSL), 111–131 (LGIL…CLSF), 143–163 (NAFV…YLLN), 185–205 (LFLV…RHNS), and 209–229 (AGVY…NMGF).

This sequence belongs to the PGAP2 family.

Its subcellular location is the golgi apparatus membrane. It is found in the endoplasmic reticulum membrane. Involved in the lipid remodeling steps of GPI-anchor maturation. Required for stable expression of GPI-anchored proteins at the cell surface. This chain is Post-GPI attachment to proteins factor 2, found in Drosophila melanogaster (Fruit fly).